A 962-amino-acid polypeptide reads, in one-letter code: Putative primase C962R (962 aa).

The SF3 helicase domain occupies 607–775 (ELDARLWIMF…PDPGNPYEKK (169 aa)). 636–643 (GGGCNGKT) contributes to the ATP binding site.

This sequence belongs to the asfivirus helicase C962R family.

This chain is Putative primase C962R, found in African swine fever virus (strain Badajoz 1971 Vero-adapted) (Ba71V).